The chain runs to 54 residues: AEDRSSLSGVSDAEAKEFHALFVSSFMGFMVVAVLAHVLAWAWRPWIPGPKGWA.

The Cytoplasmic segment spans residues Ala-1–Ala-20. Residues His-19 and His-37 each coordinate a bacteriochlorophyll. The chain crosses the membrane as a helical span at residues Leu-21–Trp-43. Residues Arg-44 to Ala-54 lie on the Periplasmic side of the membrane.

The protein belongs to the antenna complex beta subunit family. In terms of assembly, the core complex is formed by different alpha and beta chains, binding bacteriochlorophyll molecules, and arranged most probably in tetrameric structures disposed around the reaction center. The non-pigmented gamma chains may constitute additional components.

The protein localises to the cell inner membrane. Functionally, antenna complexes are light-harvesting systems, which transfer the excitation energy to the reaction centers. In Rhodoblastus acidophilus (Rhodopseudomonas acidophila), this protein is Light-harvesting protein B-880 beta chain.